A 101-amino-acid chain; its full sequence is Small ribosomal subunit protein uS14 (101 aa).

It belongs to the universal ribosomal protein uS14 family. As to quaternary structure, part of the 30S ribosomal subunit. Contacts proteins S3 and S10.

Functionally, binds 16S rRNA, required for the assembly of 30S particles and may also be responsible for determining the conformation of the 16S rRNA at the A site. The protein is Small ribosomal subunit protein uS14 of Cupriavidus metallidurans (strain ATCC 43123 / DSM 2839 / NBRC 102507 / CH34) (Ralstonia metallidurans).